Here is a 270-residue protein sequence, read N- to C-terminus: Imidazole glycerol phosphate synthase subunit HisF (270 aa).

Residues Asp-11 and Asp-130 contribute to the active site.

It belongs to the HisA/HisF family. As to quaternary structure, heterodimer of HisH and HisF.

The protein localises to the cytoplasm. The enzyme catalyses 5-[(5-phospho-1-deoxy-D-ribulos-1-ylimino)methylamino]-1-(5-phospho-beta-D-ribosyl)imidazole-4-carboxamide + L-glutamine = D-erythro-1-(imidazol-4-yl)glycerol 3-phosphate + 5-amino-1-(5-phospho-beta-D-ribosyl)imidazole-4-carboxamide + L-glutamate + H(+). It participates in amino-acid biosynthesis; L-histidine biosynthesis; L-histidine from 5-phospho-alpha-D-ribose 1-diphosphate: step 5/9. IGPS catalyzes the conversion of PRFAR and glutamine to IGP, AICAR and glutamate. The HisF subunit catalyzes the cyclization activity that produces IGP and AICAR from PRFAR using the ammonia provided by the HisH subunit. This Sorangium cellulosum (strain So ce56) (Polyangium cellulosum (strain So ce56)) protein is Imidazole glycerol phosphate synthase subunit HisF.